Reading from the N-terminus, the 506-residue chain is Aluminum-activated malate transporter 7 (506 aa).

Transmembrane regions (helical) follow at residues 28 to 48 (VGLV…YDSF), 52 to 72 (AMWA…ATLG), 78 to 98 (VAAT…ASMS), 104 to 124 (PILL…VRFF), 130 to 150 (RYDY…VSGF), and 166 to 186 (VIIG…VWAG). The interval 461–485 (DDGNNDDTSKNDNGSKEVSIHEKHE) is disordered. Positions 467–485 (DTSKNDNGSKEVSIHEKHE) are enriched in basic and acidic residues.

It belongs to the aromatic acid exporter (TC 2.A.85) family.

It localises to the membrane. Its function is as follows. Malate transporter. The polypeptide is Aluminum-activated malate transporter 7 (ALMT7) (Arabidopsis thaliana (Mouse-ear cress)).